The following is a 270-amino-acid chain: Bis(5'-nucleosyl)-tetraphosphatase, symmetrical (270 aa).

It belongs to the Ap4A hydrolase family.

The catalysed reaction is P(1),P(4)-bis(5'-adenosyl) tetraphosphate + H2O = 2 ADP + 2 H(+). Hydrolyzes diadenosine 5',5'''-P1,P4-tetraphosphate to yield ADP. This chain is Bis(5'-nucleosyl)-tetraphosphatase, symmetrical, found in Cellvibrio japonicus (strain Ueda107) (Pseudomonas fluorescens subsp. cellulosa).